The following is a 92-amino-acid chain: Small ribosomal subunit protein uS19 (92 aa).

The protein belongs to the universal ribosomal protein uS19 family.

Its function is as follows. Protein S19 forms a complex with S13 that binds strongly to the 16S ribosomal RNA. In Photobacterium profundum (strain SS9), this protein is Small ribosomal subunit protein uS19.